The primary structure comprises 516 residues: Glucose-6-phosphate 1-dehydrogenase 5, cytoplasmic (516 aa).

NADP(+) contacts are provided by residues 38–45 (GASGDLAK), R73, Y156, and K183. D-glucose 6-phosphate contacts are provided by residues K183, 213–217 (HYLGK), E251, and D270. The Proton acceptor role is filled by H275. K358 serves as a coordination point for NADP(+). Residues K361 and K366 each contribute to the D-glucose 6-phosphate site. NADP(+)-binding residues include K367, R371, and R395. Residue Q397 coordinates D-glucose 6-phosphate. Residues 403 to 405 (YMK), 423 to 425 (DLS), R489, and W511 each bind NADP(+).

Belongs to the glucose-6-phosphate dehydrogenase family. As to quaternary structure, forms homodimer. As to expression, expressed in leaves and stems.

The protein resides in the cytoplasm. The protein localises to the cytosol. It carries out the reaction D-glucose 6-phosphate + NADP(+) = 6-phospho-D-glucono-1,5-lactone + NADPH + H(+). The protein operates within carbohydrate degradation; pentose phosphate pathway; D-ribulose 5-phosphate from D-glucose 6-phosphate (oxidative stage): step 1/3. Regulated by metabolites. Its function is as follows. Catalyzes the rate-limiting step of the oxidative pentose-phosphate pathway, which represents a route for the dissimilation of carbohydrates besides glycolysis. The main function of this enzyme is to provide reducing power (NADPH) and pentose phosphates for fatty acid and nucleic acid synthesis which are involved in membrane synthesis and cell division. The sequence is that of Glucose-6-phosphate 1-dehydrogenase 5, cytoplasmic from Arabidopsis thaliana (Mouse-ear cress).